The sequence spans 676 residues: RNA helicase NPH-II (676 aa).

Residues 172 to 347 (FSAWISHRPV…VFLPNPAFIH (176 aa)) form the Helicase ATP-binding domain. An ATP-binding site is contributed by 185–192 (GGTGVGKT). The DEXH box signature appears at 296-299 (DEVH). The 170-residue stretch at 366-535 (NPSSRMAYIE…NYILYANKFN (170 aa)) folds into the Helicase C-terminal domain.

The protein belongs to the DEAD box helicase family. DEAH subfamily. In terms of assembly, monomer.

The protein resides in the virion. The enzyme catalyses ATP + H2O = ADP + phosphate + H(+). NTP-dependent helicase that catalyzes unidirectional unwinding of 3'tailed duplex RNAs and plays an important role during transcription of early mRNAs, presumably by preventing R-loop formation behind the elongating RNA polymerase. Might also play a role in the export of newly synthesized mRNA chains out of the core into the cytoplasm. Required for replication and propagation of viral particles. This Vaccinia virus (strain Ankara) (VACV) protein is RNA helicase NPH-II (OPG084).